Consider the following 251-residue polypeptide: Triosephosphate isomerase (251 aa).

9-11 contacts substrate; the sequence is NWK. H94 functions as the Electrophile in the catalytic mechanism. The active-site Proton acceptor is the E163. Residues G169, S209, and 230-231 contribute to the substrate site; that span reads GG.

It belongs to the triosephosphate isomerase family. As to quaternary structure, homodimer.

It is found in the cytoplasm. The enzyme catalyses D-glyceraldehyde 3-phosphate = dihydroxyacetone phosphate. It participates in carbohydrate biosynthesis; gluconeogenesis. It functions in the pathway carbohydrate degradation; glycolysis; D-glyceraldehyde 3-phosphate from glycerone phosphate: step 1/1. Involved in the gluconeogenesis. Catalyzes stereospecifically the conversion of dihydroxyacetone phosphate (DHAP) to D-glyceraldehyde-3-phosphate (G3P). This is Triosephosphate isomerase from Dehalococcoides mccartyi (strain ATCC BAA-2266 / KCTC 15142 / 195) (Dehalococcoides ethenogenes (strain 195)).